We begin with the raw amino-acid sequence, 297 residues long: 5'-3' exonuclease (297 aa).

One can recognise a 5'-3' exonuclease domain in the interval 171–262 (EPDQIVDFKA…MKLEKELFAI (92 aa)).

Its function is as follows. 5'-3' exonuclease acting preferentially on double-stranded DNA. In Mycoplasmopsis pulmonis (strain UAB CTIP) (Mycoplasma pulmonis), this protein is 5'-3' exonuclease (polA).